We begin with the raw amino-acid sequence, 394 residues long: Bone morphogenetic protein 15 (394 aa).

A signal peptide spans Met-1–Phe-18. A propeptide spanning residues Met-19 to Arg-269 is cleaved from the precursor. 2 N-linked (GlcNAc...) asparagine glycosylation sites follow: Asn-87 and Asn-238. Intrachain disulfides connect Cys-293/Cys-359, Cys-322/Cys-391, and Cys-326/Cys-393. Asn-375 carries an N-linked (GlcNAc...) asparagine glycan.

Belongs to the TGF-beta family. In terms of assembly, homodimer or heterodimer (Potential). But, in contrast to other members of this family, cannot be disulfide-linked.

The protein localises to the secreted. In terms of biological role, may be involved in follicular development. Seems to be an oocyte-specific growth/differentiation factor that stimulates folliculogenesis and granulosa cell (GC) growth. The polypeptide is Bone morphogenetic protein 15 (BMP15) (Bos taurus (Bovine)).